A 428-amino-acid chain; its full sequence is C4-dicarboxylate transport protein (428 aa).

The next 8 membrane-spanning stretches (helical) occupy residues 8 to 28, 44 to 64, 78 to 98, 148 to 168, 184 to 204, 222 to 242, 307 to 327, and 355 to 375; these read VLYV…HYYP, LIKM…IAGM, LLYF…ATHI, GEIL…AHLG, VLFG…FGAM, LIGT…GAIA, IYMT…LTWM, and AATL…ILGI.

Belongs to the dicarboxylate/amino acid:cation symporter (DAACS) (TC 2.A.23) family.

The protein resides in the cell inner membrane. Responsible for the transport of dicarboxylates such as succinate, fumarate, and malate from the periplasm across the membrane. The polypeptide is C4-dicarboxylate transport protein (Burkholderia pseudomallei (strain 1106a)).